The following is a 476-amino-acid chain: MTESAPSAFFTTSTPADHVHEEESSNTGYFENLPENDIHSFFEIDATSEWIKQGNHQRIALQFPDSLLPYSEKVTKLIESRFRSESAKKTFVLADTSYRSCCVDEVAAAHADCTALVHFGEACHSAPTDKIDVKYVLGSMPIFIDQFRMEFQNVADQLTAEHIVLLMDSCFSHEQEKVAAVIKEVLPGNRHVECSLLPSEDVLKQNRQNIYLGREIPSCLRNNQPTDLIFCGFPNSPLLPIWLLSYPSCSTVSHFNPINKTIQHESTRSSRLLRKRLFLVEKLKDADTVGLVVGSVGVDKHREAVKRMREMCKKAGKKIYVISVGKINVPKLSNFSTDIDVFVLLSCPFGVVLDSSDYFRPVVSYFEAEIALNPAKTWAADFGWSAEFAAFLEDKIETEVPDDKAAGDFSLISGKVRVQKTEEEKNGDGPSSVAIYNPGYCNDRTWKGLNDGVSTAEDSTKMGEGRSGIAQGYSGK.

A compositionally biased stretch (polar residues) spans 1–15 (MTESAPSAFFTTSTP). The segment at 1 to 24 (MTESAPSAFFTTSTPADHVHEEES) is disordered. Positions 102, 123, and 347 each coordinate [4Fe-4S] cluster. A disordered region spans residues 451–476 (DGVSTAEDSTKMGEGRSGIAQGYSGK).

It belongs to the DPH1/DPH2 family. DPH2 subfamily. In terms of assembly, component of the 2-(3-amino-3-carboxypropyl)histidine synthase complex composed of dph-1, dph-2, dph-3 and a NADH-dependent reductase. [4Fe-4S] cluster serves as cofactor.

It participates in protein modification; peptidyl-diphthamide biosynthesis. Its function is as follows. Required for the first step of diphthamide biosynthesis, a post-translational modification of histidine which occurs in elongation factor 2. Dph-1 and dph-2 transfer a 3-amino-3-carboxypropyl (ACP) group from S-adenosyl-L-methionine (SAM) to a histidine residue, the reaction is assisted by a reduction system comprising dph-3 and a NADH-dependent reductase. Facilitates the reduction of the catalytic iron-sulfur cluster found in the dph-1 subunit. The protein is 2-(3-amino-3-carboxypropyl)histidine synthase subunit 2 (dph-2) of Caenorhabditis elegans.